Here is a 113-residue protein sequence, read N- to C-terminus: ATP-dependent Clp protease adapter protein ClpS (113 aa).

The span at 1–11 (MHRDLHMMSDR) shows a compositional bias: basic and acidic residues. Residues 1-25 (MHRDLHMMSDRSEDDGDTSILTATK) are disordered.

The protein belongs to the ClpS family. In terms of assembly, binds to the N-terminal domain of the chaperone ClpA.

In terms of biological role, involved in the modulation of the specificity of the ClpAP-mediated ATP-dependent protein degradation. In Roseobacter denitrificans (strain ATCC 33942 / OCh 114) (Erythrobacter sp. (strain OCh 114)), this protein is ATP-dependent Clp protease adapter protein ClpS.